The primary structure comprises 471 residues: Bifunctional protein GlmU (471 aa).

Positions 1–235 (MVAVAILAAG…YQEIFGINNR (235 aa)) are pyrophosphorylase. UDP-N-acetyl-alpha-D-glucosamine is bound by residues 7-10 (LAAG), K21, Q82, and 87-88 (GT). D112 serves as a coordination point for Mg(2+). Residues G149, E164, N179, and N233 each contribute to the UDP-N-acetyl-alpha-D-glucosamine site. N233 is a Mg(2+) binding site. The linker stretch occupies residues 236-256 (KHLAKAHEILQVRVKDDWMEA). The N-acetyltransferase stretch occupies residues 257-471 (GVTLIDPDSI…SKKEENKSSP (215 aa)). UDP-N-acetyl-alpha-D-glucosamine is bound by residues R338 and K356. H368 acts as the Proton acceptor in catalysis. 2 residues coordinate UDP-N-acetyl-alpha-D-glucosamine: Y371 and N382. Acetyl-CoA is bound by residues A385, 391–392 (NY), S410, A428, and R445.

This sequence in the N-terminal section; belongs to the N-acetylglucosamine-1-phosphate uridyltransferase family. It in the C-terminal section; belongs to the transferase hexapeptide repeat family. In terms of assembly, homotrimer. Requires Mg(2+) as cofactor.

It is found in the cytoplasm. The enzyme catalyses alpha-D-glucosamine 1-phosphate + acetyl-CoA = N-acetyl-alpha-D-glucosamine 1-phosphate + CoA + H(+). It catalyses the reaction N-acetyl-alpha-D-glucosamine 1-phosphate + UTP + H(+) = UDP-N-acetyl-alpha-D-glucosamine + diphosphate. The protein operates within nucleotide-sugar biosynthesis; UDP-N-acetyl-alpha-D-glucosamine biosynthesis; N-acetyl-alpha-D-glucosamine 1-phosphate from alpha-D-glucosamine 6-phosphate (route II): step 2/2. It functions in the pathway nucleotide-sugar biosynthesis; UDP-N-acetyl-alpha-D-glucosamine biosynthesis; UDP-N-acetyl-alpha-D-glucosamine from N-acetyl-alpha-D-glucosamine 1-phosphate: step 1/1. It participates in bacterial outer membrane biogenesis; LPS lipid A biosynthesis. Functionally, catalyzes the last two sequential reactions in the de novo biosynthetic pathway for UDP-N-acetylglucosamine (UDP-GlcNAc). The C-terminal domain catalyzes the transfer of acetyl group from acetyl coenzyme A to glucosamine-1-phosphate (GlcN-1-P) to produce N-acetylglucosamine-1-phosphate (GlcNAc-1-P), which is converted into UDP-GlcNAc by the transfer of uridine 5-monophosphate (from uridine 5-triphosphate), a reaction catalyzed by the N-terminal domain. The protein is Bifunctional protein GlmU of Trichodesmium erythraeum (strain IMS101).